Here is a 385-residue protein sequence, read N- to C-terminus: GTP cyclohydrolase 1 type 2 homolog (385 aa).

5 residues coordinate a divalent metal cation: H64, H65, D103, H333, and E337.

It belongs to the GTP cyclohydrolase I type 2/NIF3 family. Homohexamer.

This Mycobacterium leprae (strain TN) protein is GTP cyclohydrolase 1 type 2 homolog.